The chain runs to 300 residues: Oxidoreductase BOA1 (300 aa).

The protein belongs to the NmrA-type oxidoreductase family. Isoflavone reductase subfamily.

It functions in the pathway polyketide biosynthesis. Functionally, oxidoreductase; part of the gene cluster A that mediates the biosynthesis of botcinic acid and its botcinin derivatives, acetate-derived polyketides that contribute to virulence when combined with the sesquiterpene botrydial. Botcinic acid and its derivatives have been shown to induce chlorosis and necrosis during host plant infection, but also have antifungal activities. Two polyketide synthases, BOA6 and BOA9, are involved in the biosynthesis of botcinins. BOA6 mediates the formation of the per-methylated tetraketide core by condensation of four units of malonyl-CoA with one unit of acetyl-CoA, which would be methylated in activated methylene groups to yield a bicyclic acid intermediate that could then either be converted to botrylactone derivatives or lose the starter acetate unit through a retro-Claisen type C-C bond cleavage to yield botcinin derivatives. The second polyketide synthase, BOA9, is probably required for the biosynthesis of the tetraketide side chain of botcinins. The methyltransferase (MT) domain within BOA6 is probably responsible for the incorporation of four methyl groups. The trans-enoyl reductase BOA5 might take over the enoyl reductase function of BOA6 that misses an ER domain. The monooxygenases BOA2, BOA3 and BOA4 might be involved in further hydroxylations at C4, C5 and C8, whereas BOA7, close to BOA9, could potentially be involved in the hydroxylation at C4 in the side chain of botcinins. The polypeptide is Oxidoreductase BOA1 (Botryotinia fuckeliana (strain B05.10) (Noble rot fungus)).